Reading from the N-terminus, the 347-residue chain is N-acetyl-gamma-glutamyl-phosphate reductase (347 aa).

C155 is a catalytic residue.

The protein belongs to the NAGSA dehydrogenase family. Type 1 subfamily.

The protein resides in the cytoplasm. It carries out the reaction N-acetyl-L-glutamate 5-semialdehyde + phosphate + NADP(+) = N-acetyl-L-glutamyl 5-phosphate + NADPH + H(+). Its pathway is amino-acid biosynthesis; L-arginine biosynthesis; N(2)-acetyl-L-ornithine from L-glutamate: step 3/4. In terms of biological role, catalyzes the NADPH-dependent reduction of N-acetyl-5-glutamyl phosphate to yield N-acetyl-L-glutamate 5-semialdehyde. This Akkermansia muciniphila (strain ATCC BAA-835 / DSM 22959 / JCM 33894 / BCRC 81048 / CCUG 64013 / CIP 107961 / Muc) protein is N-acetyl-gamma-glutamyl-phosphate reductase.